Reading from the N-terminus, the 454-residue chain is uncharacterized protein (454 aa).

Residues 1-25 (MHGPTSKAISRNVRSVKRPRRAPRP) are disordered. A compositionally biased stretch (basic residues) spans 14-23 (RSVKRPRRAP).

It localises to the cytoplasm. The protein resides in the nucleus. This is an uncharacterized protein from Saccharomyces cerevisiae (strain ATCC 204508 / S288c) (Baker's yeast).